The primary structure comprises 334 residues: Holliday junction branch migration complex subunit RuvB (334 aa).

The interval 4–184 (ADRLISAAVI…FGIVQRLEFY (181 aa)) is large ATPase domain (RuvB-L). ATP contacts are provided by residues isoleucine 23, arginine 24, glycine 65, lysine 68, threonine 69, threonine 70, 131–133 (EDY), arginine 174, tyrosine 184, and arginine 221. A Mg(2+)-binding site is contributed by threonine 69. Residues 185 to 255 (PVADLEHIVS…VAMKALDMLN (71 aa)) form a small ATPAse domain (RuvB-S) region. The interval 258–334 (AEGFDFMDRK…YKHFGITREE (77 aa)) is head domain (RuvB-H). Arginine 294, arginine 313, and arginine 318 together coordinate DNA.

The protein belongs to the RuvB family. As to quaternary structure, homohexamer. Forms an RuvA(8)-RuvB(12)-Holliday junction (HJ) complex. HJ DNA is sandwiched between 2 RuvA tetramers; dsDNA enters through RuvA and exits via RuvB. An RuvB hexamer assembles on each DNA strand where it exits the tetramer. Each RuvB hexamer is contacted by two RuvA subunits (via domain III) on 2 adjacent RuvB subunits; this complex drives branch migration. In the full resolvosome a probable DNA-RuvA(4)-RuvB(12)-RuvC(2) complex forms which resolves the HJ.

The protein resides in the cytoplasm. It catalyses the reaction ATP + H2O = ADP + phosphate + H(+). The RuvA-RuvB-RuvC complex processes Holliday junction (HJ) DNA during genetic recombination and DNA repair, while the RuvA-RuvB complex plays an important role in the rescue of blocked DNA replication forks via replication fork reversal (RFR). RuvA specifically binds to HJ cruciform DNA, conferring on it an open structure. The RuvB hexamer acts as an ATP-dependent pump, pulling dsDNA into and through the RuvAB complex. RuvB forms 2 homohexamers on either side of HJ DNA bound by 1 or 2 RuvA tetramers; 4 subunits per hexamer contact DNA at a time. Coordinated motions by a converter formed by DNA-disengaged RuvB subunits stimulates ATP hydrolysis and nucleotide exchange. Immobilization of the converter enables RuvB to convert the ATP-contained energy into a lever motion, pulling 2 nucleotides of DNA out of the RuvA tetramer per ATP hydrolyzed, thus driving DNA branch migration. The RuvB motors rotate together with the DNA substrate, which together with the progressing nucleotide cycle form the mechanistic basis for DNA recombination by continuous HJ branch migration. Branch migration allows RuvC to scan DNA until it finds its consensus sequence, where it cleaves and resolves cruciform DNA. The protein is Holliday junction branch migration complex subunit RuvB of Yersinia pestis bv. Antiqua (strain Angola).